The chain runs to 145 residues: Large ribosomal subunit protein uL13 (145 aa).

The protein belongs to the universal ribosomal protein uL13 family. Part of the 50S ribosomal subunit.

Functionally, this protein is one of the early assembly proteins of the 50S ribosomal subunit, although it is not seen to bind rRNA by itself. It is important during the early stages of 50S assembly. The polypeptide is Large ribosomal subunit protein uL13 (Staphylococcus haemolyticus (strain JCSC1435)).